The sequence spans 956 residues: UvrABC system protein A (956 aa).

33-40 (GLSGSGKS) is a binding site for ATP. Residues 252-279 (CPYCGFSVGELEPRMFSFNSPFGACPTC) form a C4-type zinc finger. 2 ABC transporter domains span residues 309 to 587 (WRPI…KNSI) and 607 to 936 (GNGL…KYLK). An ATP-binding site is contributed by 639–646 (GVSGSGKS). A C4-type zinc finger spans residues 738–764 (CEACKGDGIIKIEMHFLPDVYVPCEVC).

The protein belongs to the ABC transporter superfamily. UvrA family. As to quaternary structure, forms a heterotetramer with UvrB during the search for lesions.

It localises to the cytoplasm. Its function is as follows. The UvrABC repair system catalyzes the recognition and processing of DNA lesions. UvrA is an ATPase and a DNA-binding protein. A damage recognition complex composed of 2 UvrA and 2 UvrB subunits scans DNA for abnormalities. When the presence of a lesion has been verified by UvrB, the UvrA molecules dissociate. This is UvrABC system protein A from Listeria innocua serovar 6a (strain ATCC BAA-680 / CLIP 11262).